A 525-amino-acid chain; its full sequence is D-3-phosphoglycerate dehydrogenase (525 aa).

Residues 148 to 149 (RI), Asp-168, Thr-200, 227 to 229 (CAR), and Asp-253 each bind NAD(+). Arg-229 is an active-site residue. Glu-258 is an active-site residue. The active-site Proton donor is the His-276. 276–279 (HLGA) provides a ligand contact to NAD(+). Residues 452 to 524 (LVYIQHQDTT…DIVSVKLIDL (73 aa)) enclose the ACT domain.

It belongs to the D-isomer specific 2-hydroxyacid dehydrogenase family.

The enzyme catalyses (2R)-3-phosphoglycerate + NAD(+) = 3-phosphooxypyruvate + NADH + H(+). The catalysed reaction is (R)-2-hydroxyglutarate + NAD(+) = 2-oxoglutarate + NADH + H(+). It participates in amino-acid biosynthesis; L-serine biosynthesis; L-serine from 3-phospho-D-glycerate: step 1/3. Its activity is regulated as follows. In bacteria displays feedback inhibition by L-serine. In terms of biological role, catalyzes the reversible oxidation of 3-phospho-D-glycerate to 3-phosphonooxypyruvate, the first step of the phosphorylated L-serine biosynthesis pathway. Also catalyzes the reversible oxidation of 2-hydroxyglutarate to 2-oxoglutarate. The sequence is that of D-3-phosphoglycerate dehydrogenase (serA) from Bacillus subtilis (strain 168).